A 441-amino-acid polypeptide reads, in one-letter code: Probable membrane metalloprotease ARASP2, chloroplastic (441 aa).

Residues 1-84 constitute a chloroplast transit peptide; it reads MLLNISSSPI…DFGSLESVLE (84 aa). His-96 serves as a coordination point for Zn(2+). The active site involves Glu-97. His-100 is a Zn(2+) binding site. The chain crosses the membrane as a helical span at residues 171–191; the sequence is VIVVSAGIVANVIFAYAIIFT. The PDZ domain occupies 196–249; the sequence is VGLPVQESFPGVLVPDVKSFSAASRDGLLPGDVILAVDGTELSNSGSDSVSKVV. 2 helical membrane passes run 373-393 and 407-427; these read LAVI…ALIL and VEQG…LFLI.

The protein belongs to the peptidase M50A family. Requires Zn(2+) as cofactor.

It is found in the plastid. Its subcellular location is the chloroplast inner membrane. Its function is as follows. Metalloprotease essential for chloroplast and plant development. May be involved in regulated intramembrane proteolysis (RIP). The chain is Probable membrane metalloprotease ARASP2, chloroplastic from Arabidopsis thaliana (Mouse-ear cress).